The chain runs to 164 residues: UPF0114 protein BCI_0033 (164 aa).

3 helical membrane-spanning segments follow: residues 15–35, 53–73, and 136–156; these read LLFP…LKFF, LILI…LVMV, and IMWC…MAYI.

Belongs to the UPF0114 family.

It is found in the cell membrane. This Baumannia cicadellinicola subsp. Homalodisca coagulata protein is UPF0114 protein BCI_0033.